Consider the following 384-residue polypeptide: S-adenosylmethionine synthase (384 aa).

H15 contacts ATP. D17 serves as a coordination point for Mg(2+). E43 provides a ligand contact to K(+). Positions 56 and 99 each coordinate L-methionine. Positions 99 to 109 are flexible loop; the sequence is QSPDINQGVDR. Residues 164–166, 230–231, D239, 245–246, A262, and K266 contribute to the ATP site; these read DAK, RF, and RK. Residue D239 participates in L-methionine binding. K270 serves as a coordination point for L-methionine.

The protein belongs to the AdoMet synthase family. As to quaternary structure, homotetramer; dimer of dimers. The cofactor is Mg(2+). It depends on K(+) as a cofactor.

It is found in the cytoplasm. It carries out the reaction L-methionine + ATP + H2O = S-adenosyl-L-methionine + phosphate + diphosphate. Its pathway is amino-acid biosynthesis; S-adenosyl-L-methionine biosynthesis; S-adenosyl-L-methionine from L-methionine: step 1/1. Its function is as follows. Catalyzes the formation of S-adenosylmethionine (AdoMet) from methionine and ATP. The overall synthetic reaction is composed of two sequential steps, AdoMet formation and the subsequent tripolyphosphate hydrolysis which occurs prior to release of AdoMet from the enzyme. The chain is S-adenosylmethionine synthase from Klebsiella pneumoniae (strain 342).